The primary structure comprises 458 residues: Aldehyde dehydrogenase (458 aa).

NADP(+)-binding positions include 134–135, 158–161, and 210–211; these read WN, KHAS, and GS. Glu-232 functions as the Proton acceptor in the catalytic mechanism. Leu-233 contributes to the NADP(+) binding site. The Nucleophile role is filled by Cys-266. Glu-363 is a binding site for NADP(+).

This sequence belongs to the aldehyde dehydrogenase family. In terms of assembly, monomer.

It catalyses the reaction an aldehyde + NAD(+) + H2O = a carboxylate + NADH + 2 H(+). The catalysed reaction is an aldehyde + NADP(+) + H2O = a carboxylate + NADPH + 2 H(+). Its pathway is carbohydrate metabolism; D-xylose degradation. Aldehyde dehydrogenase able to oxidize various aldehydes such as formaldehyde, glyceraldehyde, butyraldehyde, glutaraldehyde and benzaldehyde (in vitro). Is likely involved in the oxidative D-xylose degradation pathway, catalyzing the oxidation step of 2-oxoglutarate semialdehyde to 2-oxoglutarate. Is able to use both NAD(+) and NADP(+); however, shows a preference for NADP(+). Does not display succinate semialdehyde dehydrogenase activity. The chain is Aldehyde dehydrogenase (aldh) from Paenarthrobacter nicotinovorans (Arthrobacter nicotinovorans).